The following is a 232-amino-acid chain: Large ribosomal subunit protein uL1 (232 aa).

Belongs to the universal ribosomal protein uL1 family. In terms of assembly, part of the 50S ribosomal subunit.

Its function is as follows. Binds directly to 23S rRNA. The L1 stalk is quite mobile in the ribosome, and is involved in E site tRNA release. In terms of biological role, protein L1 is also a translational repressor protein, it controls the translation of the L11 operon by binding to its mRNA. In Variovorax paradoxus (strain S110), this protein is Large ribosomal subunit protein uL1.